Reading from the N-terminus, the 133-residue chain is Small ribosomal subunit protein uS11 (133 aa).

It belongs to the universal ribosomal protein uS11 family. Part of the 30S ribosomal subunit. Interacts with proteins S7 and S18. Binds to IF-3.

Its function is as follows. Located on the platform of the 30S subunit, it bridges several disparate RNA helices of the 16S rRNA. Forms part of the Shine-Dalgarno cleft in the 70S ribosome. The sequence is that of Small ribosomal subunit protein uS11 from Cupriavidus metallidurans (strain ATCC 43123 / DSM 2839 / NBRC 102507 / CH34) (Ralstonia metallidurans).